The primary structure comprises 206 residues: Small ribosomal subunit protein uS4 (206 aa).

An S4 RNA-binding domain is found at 96-156; the sequence is GRLDNVVYRM…EKSKKQARIK (61 aa).

The protein belongs to the universal ribosomal protein uS4 family. As to quaternary structure, part of the 30S ribosomal subunit. Contacts protein S5. The interaction surface between S4 and S5 is involved in control of translational fidelity.

Functionally, one of the primary rRNA binding proteins, it binds directly to 16S rRNA where it nucleates assembly of the body of the 30S subunit. Its function is as follows. With S5 and S12 plays an important role in translational accuracy. The polypeptide is Small ribosomal subunit protein uS4 (Actinobacillus succinogenes (strain ATCC 55618 / DSM 22257 / CCUG 43843 / 130Z)).